Reading from the N-terminus, the 89-residue chain is Small ribosomal subunit protein uS15 (89 aa).

Belongs to the universal ribosomal protein uS15 family. Part of the 30S ribosomal subunit. Forms a bridge to the 50S subunit in the 70S ribosome, contacting the 23S rRNA.

Its function is as follows. One of the primary rRNA binding proteins, it binds directly to 16S rRNA where it helps nucleate assembly of the platform of the 30S subunit by binding and bridging several RNA helices of the 16S rRNA. Forms an intersubunit bridge (bridge B4) with the 23S rRNA of the 50S subunit in the ribosome. This is Small ribosomal subunit protein uS15 from Rhizorhabdus wittichii (strain DSM 6014 / CCUG 31198 / JCM 15750 / NBRC 105917 / EY 4224 / RW1) (Sphingomonas wittichii).